The primary structure comprises 101 residues: Small ribosomal subunit protein uS14 (101 aa).

Residues 51-70 form a disordered region; the sequence is LPRDSSPSRQRNRCRQTGRP.

Belongs to the universal ribosomal protein uS14 family. As to quaternary structure, part of the 30S ribosomal subunit. Contacts proteins S3 and S10.

Its function is as follows. Binds 16S rRNA, required for the assembly of 30S particles and may also be responsible for determining the conformation of the 16S rRNA at the A site. This is Small ribosomal subunit protein uS14 from Salmonella arizonae (strain ATCC BAA-731 / CDC346-86 / RSK2980).